We begin with the raw amino-acid sequence, 293 residues long: Elongation factor Ts (293 aa).

An involved in Mg(2+) ion dislocation from EF-Tu region spans residues 80–83 (TDFV).

It belongs to the EF-Ts family.

It is found in the cytoplasm. In terms of biological role, associates with the EF-Tu.GDP complex and induces the exchange of GDP to GTP. It remains bound to the aminoacyl-tRNA.EF-Tu.GTP complex up to the GTP hydrolysis stage on the ribosome. This is Elongation factor Ts from Staphylococcus aureus (strain Mu3 / ATCC 700698).